A 159-amino-acid polypeptide reads, in one-letter code: Ribosomal RNA large subunit methyltransferase H (159 aa).

S-adenosyl-L-methionine contacts are provided by residues Leu-76, Gly-107, and Leu-126–Leu-131.

Belongs to the RNA methyltransferase RlmH family. As to quaternary structure, homodimer.

Its subcellular location is the cytoplasm. The enzyme catalyses pseudouridine(1915) in 23S rRNA + S-adenosyl-L-methionine = N(3)-methylpseudouridine(1915) in 23S rRNA + S-adenosyl-L-homocysteine + H(+). Its function is as follows. Specifically methylates the pseudouridine at position 1915 (m3Psi1915) in 23S rRNA. The sequence is that of Ribosomal RNA large subunit methyltransferase H from Cupriavidus pinatubonensis (strain JMP 134 / LMG 1197) (Cupriavidus necator (strain JMP 134)).